We begin with the raw amino-acid sequence, 130 residues long: Small ribosomal subunit protein uS9 (130 aa).

Residues 101–130 (AGLLTRDARMKERKKPGLKKARKASQFSKR) are disordered. A compositionally biased stretch (basic residues) spans 111–130 (KERKKPGLKKARKASQFSKR).

The protein belongs to the universal ribosomal protein uS9 family.

This chain is Small ribosomal subunit protein uS9, found in Levilactobacillus brevis (strain ATCC 367 / BCRC 12310 / CIP 105137 / JCM 1170 / LMG 11437 / NCIMB 947 / NCTC 947) (Lactobacillus brevis).